A 453-amino-acid chain; its full sequence is Homogentisate 1,2-dioxygenase (453 aa).

Catalysis depends on H306, which acts as the Proton acceptor. Fe cation is bound by residues H349 and E355. Homogentisate is bound by residues Y364 and H385. Residue H385 coordinates Fe cation.

It belongs to the homogentisate dioxygenase family. As to quaternary structure, hexamer; dimer of trimers. The cofactor is Fe cation.

The catalysed reaction is homogentisate + O2 = 4-maleylacetoacetate + H(+). It participates in amino-acid degradation; L-phenylalanine degradation; acetoacetate and fumarate from L-phenylalanine: step 4/6. Functionally, involved in the catabolism of homogentisate (2,5-dihydroxyphenylacetate or 2,5-OH-PhAc), a central intermediate in the degradation of phenylalanine and tyrosine. Catalyzes the oxidative ring cleavage of the aromatic ring of homogentisate to yield maleylacetoacetate. This chain is Homogentisate 1,2-dioxygenase, found in Rhizobium leguminosarum bv. trifolii (strain WSM2304).